Consider the following 145-residue polypeptide: D-aminoacyl-tRNA deacylase (145 aa).

Residues 137-138 (GP) carry the Gly-cisPro motif, important for rejection of L-amino acids motif.

The protein belongs to the DTD family. In terms of assembly, homodimer.

It localises to the cytoplasm. It carries out the reaction glycyl-tRNA(Ala) + H2O = tRNA(Ala) + glycine + H(+). The catalysed reaction is a D-aminoacyl-tRNA + H2O = a tRNA + a D-alpha-amino acid + H(+). In terms of biological role, an aminoacyl-tRNA editing enzyme that deacylates mischarged D-aminoacyl-tRNAs. Also deacylates mischarged glycyl-tRNA(Ala), protecting cells against glycine mischarging by AlaRS. Acts via tRNA-based rather than protein-based catalysis; rejects L-amino acids rather than detecting D-amino acids in the active site. By recycling D-aminoacyl-tRNA to D-amino acids and free tRNA molecules, this enzyme counteracts the toxicity associated with the formation of D-aminoacyl-tRNA entities in vivo and helps enforce protein L-homochirality. The sequence is that of D-aminoacyl-tRNA deacylase from Shewanella baltica (strain OS223).